The following is a 200-amino-acid chain: Sorting nexin-10 (200 aa).

The tract at residues 8–125 is required for interaction with ATP6V1D; it reads EEFVSVWVRD…SLHLFLQSHL (118 aa). A PX domain is found at 10–127; sequence FVSVWVRDPR…HLFLQSHLNS (118 aa). Residues R53, K79, and R94 each coordinate a 1,2-diacyl-sn-glycero-3-phospho-(1D-myo-inositol-3-phosphate). The span at 156–167 shows a compositional bias: basic and acidic residues; sequence FPEEEEGKKEND. The tract at residues 156 to 200 is disordered; sequence FPEEEEGKKENDIDYDSESSSSGFGHSSDDSSSHGCKMSTAPQES.

The protein belongs to the sorting nexin family. In terms of assembly, interacts with ATP6V1D; may play a role in ciliogenesis.

It is found in the cytoplasm. Its subcellular location is the endosome membrane. It localises to the cytoskeleton. The protein localises to the microtubule organizing center. The protein resides in the centrosome. In terms of biological role, probable phosphoinositide-binding protein involved in protein sorting and membrane trafficking in endosomes. Plays a role in cilium biogenesis through regulation of the transport and the localization of proteins to the cilium. Required for the localization to the cilium of V-ATPase subunit ATP6V1D and ATP6V0D1, and RAB8A. Involved in osteoclast differentiation and therefore bone resorption. The polypeptide is Sorting nexin-10 (SNX10) (Bos taurus (Bovine)).